The following is a 212-amino-acid chain: MADTIVDAVSRALDEAPGRNFRETVDLAVNLRDLDLNDPSKRVDESIVLPSGTGQDTQIVVFATGETALRAEDAADEVLGPDELEDFGDDTDAAKDLADETDFFVAEAGLMQDIGRYLGTVLGPRGKMPTPLQPDDDVVETVNRMKNTVQLRSRDRRTFHTRVGADDMTPDEIAENIDVIVRRLEATLEKGPLNIDSVYVKTTMGPSVEVPA.

It belongs to the universal ribosomal protein uL1 family. Part of the 50S ribosomal subunit.

In terms of biological role, binds directly to 23S rRNA. Probably involved in E site tRNA release. Functionally, protein L1 is also a translational repressor protein, it controls the translation of its operon by binding to its mRNA. This Haloferax volcanii (strain ATCC 29605 / DSM 3757 / JCM 8879 / NBRC 14742 / NCIMB 2012 / VKM B-1768 / DS2) (Halobacterium volcanii) protein is Large ribosomal subunit protein uL1.